A 599-amino-acid chain; its full sequence is UvrABC system protein C (599 aa).

One can recognise a GIY-YIG domain in the interval 15–93 (EKPGCYQYFD…IKEYQPRYNV (79 aa)). The UVR domain occupies 207–242 (HRLVRMYRDRMQVYSEGLRFEEAQICKERIELLERY).

The protein belongs to the UvrC family. Interacts with UvrB in an incision complex.

It localises to the cytoplasm. Its function is as follows. The UvrABC repair system catalyzes the recognition and processing of DNA lesions. UvrC both incises the 5' and 3' sides of the lesion. The N-terminal half is responsible for the 3' incision and the C-terminal half is responsible for the 5' incision. This chain is UvrABC system protein C, found in Porphyromonas gingivalis (strain ATCC BAA-308 / W83).